Consider the following 276-residue polypeptide: Ribosomal RNA small subunit methyltransferase A (276 aa).

Asn16, Leu18, Gly43, Glu64, Asp89, and Asn109 together coordinate S-adenosyl-L-methionine.

The protein belongs to the class I-like SAM-binding methyltransferase superfamily. rRNA adenine N(6)-methyltransferase family. RsmA subfamily.

The protein localises to the cytoplasm. The catalysed reaction is adenosine(1518)/adenosine(1519) in 16S rRNA + 4 S-adenosyl-L-methionine = N(6)-dimethyladenosine(1518)/N(6)-dimethyladenosine(1519) in 16S rRNA + 4 S-adenosyl-L-homocysteine + 4 H(+). Functionally, specifically dimethylates two adjacent adenosines (A1518 and A1519) in the loop of a conserved hairpin near the 3'-end of 16S rRNA in the 30S particle. May play a critical role in biogenesis of 30S subunits. The chain is Ribosomal RNA small subunit methyltransferase A from Marinobacter nauticus (strain ATCC 700491 / DSM 11845 / VT8) (Marinobacter aquaeolei).